The primary structure comprises 138 residues: Phosphoribosyl-AMP cyclohydrolase (138 aa).

D84 contributes to the Mg(2+) binding site. Zn(2+) is bound at residue C85. Mg(2+)-binding residues include D86 and D88. 2 residues coordinate Zn(2+): C102 and C109.

Belongs to the PRA-CH family. As to quaternary structure, homodimer. It depends on Mg(2+) as a cofactor. The cofactor is Zn(2+).

It localises to the cytoplasm. The enzyme catalyses 1-(5-phospho-beta-D-ribosyl)-5'-AMP + H2O = 1-(5-phospho-beta-D-ribosyl)-5-[(5-phospho-beta-D-ribosylamino)methylideneamino]imidazole-4-carboxamide. Its pathway is amino-acid biosynthesis; L-histidine biosynthesis; L-histidine from 5-phospho-alpha-D-ribose 1-diphosphate: step 3/9. In terms of biological role, catalyzes the hydrolysis of the adenine ring of phosphoribosyl-AMP. The chain is Phosphoribosyl-AMP cyclohydrolase from Burkholderia pseudomallei (strain K96243).